Here is a 2339-residue protein sequence, read N- to C-terminus: Voltage-dependent N-type calcium channel subunit alpha-1B (2339 aa).

A disordered region spans residues 1–37 (MVRFGDELGGRYGGPGGGERARGGGAGGAGGPGPGGL). The Cytoplasmic segment spans residues 1–90 (MVRFGDELGG…DNVVRKYAKR (90 aa)). Over residues 10 to 37 (GRYGGPGGGERARGGGAGGAGGPGPGGL) the composition is skewed to gly residues. Arginine 22 is subject to Omega-N-methylarginine. Residues 82–359 (NVVRKYAKRI…LVLGVLSGEF (278 aa)) form an I repeat. A helical transmembrane segment spans residues 91–114 (ITEWPPFEYMILATIIANCIVLAL). Topologically, residues 115–131 (EQHLPDGDKTPMSERLD) are extracellular. The helical transmembrane segment at 132–152 (DTEPYFIGIFCFEAGIKIIAL) threads the bilayer. Residues 153–163 (GFVFHKGSYLR) are Cytoplasmic-facing. A helical transmembrane segment spans residues 164 to 182 (NGWNVMDFVVVLTGILATA). The Extracellular segment spans residues 183–187 (GTDFD). A helical transmembrane segment spans residues 188–211 (LRTLRAVRVLRPLKLVSGIPSLQV). Residues 212–221 (VLKSIMKAMV) are Cytoplasmic-facing. Residues 222 to 244 (PLLQIGLLLFFAILMFAIIGLEF) traverse the membrane as a helical segment. The Extracellular portion of the chain corresponds to 245-331 (YMGKFHKACF…NTNDAAGNTW (87 aa)). The N-linked (GlcNAc...) asparagine glycan is linked to asparagine 256. A helical transmembrane segment spans residues 332 to 356 (NWLYFIPLIIIGSFFMLNLVLGVLS). Residues 357–482 (GEFAKERERV…FFIRRMVKAQ (126 aa)) lie on the Cytoplasmic side of the membrane. Positions 379–396 (QQIERELNGYLEWIFKAE) are binding to the beta subunit. Serine 411 bears the Phosphoserine mark. 451 to 458 (ASLKSGKT) contacts ATP. Residues 468–712 (EKMFRFFIRR…VFLAIAVDNL (245 aa)) form an II repeat. Residues 483–501 (SFYWVVLCVVALNTLCVAM) form a helical membrane-spanning segment. Residues 502–511 (VHYNQPRRLT) are Extracellular-facing. The chain crosses the membrane as a helical span at residues 512–534 (TTLYFAEFVFLGLFLTEMSLKMY). The Cytoplasmic segment spans residues 535–544 (GLGPRSYFRS). Serine 544 serves as a coordination point for a 1,2-diacyl-sn-glycero-3-phospho-(1D-myo-inositol-4,5-bisphosphate). A helical membrane pass occupies residues 545-566 (SFNCFDFGVIVGSVFEVVWAAI). The Extracellular portion of the chain corresponds to 567–573 (KPGSSFG). Residues 574-586 (ISVLRALRLLRIF) traverse the membrane as a helical segment. Residues arginine 584 and lysine 587 each contribute to the a 1,2-diacyl-sn-glycero-3-phospho-(1D-myo-inositol-4,5-bisphosphate) site. Topologically, residues 587-604 (KVTKYWSSLRNLVVSLLN) are cytoplasmic. The chain crosses the membrane as a helical span at residues 605-630 (SMKSIISLLFLLFLFIVVFALLGMQL). The Extracellular portion of the chain corresponds to 631–682 (FGGQFNFQDETPTTNFDTFPAAILTVFQILTGEDWNAVMYHGIESQGGVSKG). A helical membrane pass occupies residues 683-709 (MFSSFYFIVLTLFGNYTLLNVFLAIAV). Topologically, residues 710–1151 (DNLANAQELT…FCHYIVTMRY (442 aa)) are cytoplasmic. Residues serine 745, serine 748, and serine 783 each carry the phosphoserine modification. 4 stretches are compositionally biased toward basic and acidic residues: residues 816 to 826 (PLVVELGRDGA), 857 to 886 (KDKT…EERP), 922 to 932 (GSPEEAAEREP), and 965 to 976 (GPREAESGEEPA). Disordered regions lie at residues 816 to 1038 (PLVV…VTVG) and 1054 to 1076 (QPED…DPNT). Positions 977–986 (RRHRARHKAQ) are enriched in basic residues. The span at 990–1029 (EAVEKETTEKEATEKEAEIVEADKEKELRNHQPREPHCDL) shows a compositional bias: basic and acidic residues. Serine 1069 is subject to Phosphoserine. The III repeat unit spans residues 1137 to 1419 (NLLRRFCHYI…IFVALIIITF (283 aa)). The chain crosses the membrane as a helical span at residues 1152-1170 (FEVVILVVIALSSIALAAE). Residues 1171-1178 (DPVRTDSP) are Extracellular-facing. The chain crosses the membrane as a helical span at residues 1179-1203 (RNNALKYLDYIFTGVFTFEMVIKMI). Residues 1204–1217 (DLGLLLHPGAYFRD) are Cytoplasmic-facing. The chain crosses the membrane as a helical span at residues 1218–1238 (LWNILDFIVVSGALVAFAFSG). Topologically, residues 1239–1244 (SKGKDI) are extracellular. Residues 1245–1265 (NTIKSLRVLRVLRPLKTIKRL) traverse the membrane as a helical segment. The Cytoplasmic segment spans residues 1266–1283 (PKLKAVFDCVVNSLKNVL). Residues 1284-1303 (NILIVYMLFMFIFAVIAVQL) traverse the membrane as a helical segment. Residues 1304–1390 (FKGKFFYCTD…EQGPSPGYRM (87 aa)) lie on the Extracellular side of the membrane. The chain crosses the membrane as a helical span at residues 1391 to 1416 (ELSIFYVVYFVVFPFFFVNIFVALII). Residues 1417 to 1471 (ITFQEQGDKVMSECSLEKNERACIDFAISAKPLTRYMPQNRQSFQYKTWTFVVSP) lie on the Cytoplasmic side of the membrane. The IV repeat unit spans residues 1456-1711 (NRQSFQYKTW…LFVAVIMDNF (256 aa)). Residues 1472–1490 (PFEYFIMAMIALNTVVLMM) form a helical membrane-spanning segment. Topologically, residues 1491–1498 (KFYDAPYE) are extracellular. A helical membrane pass occupies residues 1499–1523 (YELMLKCLNIVFTSMFSMECVLKII). Residues 1524–1533 (AFGVLNYFRD) lie on the Cytoplasmic side of the membrane. Residues 1534 to 1555 (AWNVFDFVTVLGSITDILVTEI) form a helical membrane-spanning segment. Residues 1556–1563 (AETNNFIN) lie on the Extracellular side of the membrane. Asparagine 1563 is a glycosylation site (N-linked (GlcNAc...) asparagine). Residues 1564-1582 (LSFLRLFRAARLIKLLRQG) traverse the membrane as a helical segment. The Cytoplasmic portion of the chain corresponds to 1583–1601 (YTIRILLWTFVQSFKALPY). A helical transmembrane segment spans residues 1602–1621 (VCLLIAMLFFIYAIIGMQVF). At 1622–1683 (GNIALDDDTS…ANATECGSDF (62 aa)) the chain is on the extracellular side. Asparagine 1675 carries an N-linked (GlcNAc...) asparagine glycan. Residues 1684-1707 (AYFYFVSFIFLCSFLMLNLFVAVI) traverse the membrane as a helical segment. Residues 1708-2339 (MDNFEYLTRD…YHHPDQDHWC (632 aa)) are Cytoplasmic-facing. An EF-hand domain is found at 1724–1759 (HHLDEFIRVWAEYDPAACGRISYNDMFEMLKHMSPP). Ca(2+) contacts are provided by aspartate 1737, arginine 1743, and aspartate 1748. Polar residues predominate over residues 1916–1931 (SSTSLSNGGAIQNQES). Disordered stretches follow at residues 1916-1968 (SSTS…VGRS) and 1981-2206 (TRRG…YKTA). A compositionally biased stretch (basic and acidic residues) spans 1946–1960 (DAPHEARPPLERGHS). The segment covering 2049-2063 (SHHHHHRCHRRRDRK) has biased composition (basic residues). At serine 2066 the chain carries Phosphoserine. The span at 2098–2116 (CRRERERRQERGRSQERRQ) shows a compositional bias: basic and acidic residues. Over residues 2143–2153 (PSLSSHPTSPT) the composition is skewed to low complexity. Residues 2164-2180 (GSGSVNGSPLLSTSGAS) show a composition bias toward polar residues. A phosphoserine mark is found at serine 2224, serine 2233, and serine 2256.

Belongs to the calcium channel alpha-1 subunit (TC 1.A.1.11) family. CACNA1B subfamily. Multisubunit complex consisting of alpha-1, alpha-2, beta and delta subunits in a 1:1:1:1 ratio. The channel activity is directed by the pore-forming and voltage-sensitive alpha-1 subunit. In many cases, this subunit is sufficient to generate voltage-sensitive calcium channel activity. The auxiliary subunits beta and alpha-2/delta linked by a disulfide bridge regulate the channel activity. Interacts with RIMS1. Interacts with FMR1 (via C-terminus); this interaction induces a decrease in the number of presynaptic functional CACNA1B channels at the cell surface. Post-translationally, phosphorylated in vitro by CaM-kinase II, PKA, PKC and CGPK. As to expression, isoform Alpha-1b-1 and isoform Alpha-1b-2 are expressed in the central nervous system, but not in skeletal muscle or aorta. Expressed in the cerebral white matter, cortex, hippocampus, basal ganglia, and cerebellum.

It localises to the membrane. It carries out the reaction Ca(2+)(in) = Ca(2+)(out). Is specifically blocked by omega-conotoxin GVIA. Is specifically blocked by omega-conotoxin MVIIA (ziconotide). Is insensitive to dihydropyridines (DHP). With respect to regulation, is specifically blocked by omega-conotoxin MVIIA (ziconotide). Is insensitive to dihydropyridines (DHP). Its function is as follows. Voltage-sensitive calcium channels (VSCC) mediate the entry of calcium ions into excitable cells and are also involved in a variety of calcium-dependent processes, including muscle contraction, hormone or neurotransmitter release, gene expression, cell motility, cell division and cell death. This alpha-1B subunit gives rise to N-type calcium currents. N-type calcium channels belong to the 'high-voltage activated' (HVA) group. They are involved in pain signaling. Calcium channels containing alpha-1B subunit may play a role in directed migration of immature neurons. Mediates Ca(2+) release probability at hippocampal neuronal soma and synaptic terminals. Voltage-sensitive calcium channels (VSCC) mediate the entry of calcium ions into excitable cells and are also involved in a variety of calcium-dependent processes, including muscle contraction, hormone or neurotransmitter release, gene expression, cell motility, cell division and cell death. This alpha-1B subunit gives rise to N-type calcium currents. The polypeptide is Voltage-dependent N-type calcium channel subunit alpha-1B (CACNA1B) (Homo sapiens (Human)).